Consider the following 330-residue polypeptide: Zinc finger protein Gfi-1b (330 aa).

The interval 1–20 (MPRSFLVKSKKAHTYHQPRA) is SNAG domain. 2 disordered regions span residues 1–21 (MPRS…PRAQ) and 75–99 (MASA…SESP). Position 8 is an N6,N6-dimethyllysine (lysine 8). The interaction with ARIH2 stretch occupies residues 91–330 (GESPLSESPP…RHRESQHNLK (240 aa)). 6 C2H2-type zinc fingers span residues 163–186 (YHCV…RRSH), 192–214 (FACD…THVH), 220–242 (FECR…LLIH), 248–270 (YPCQ…TYIH), 276–298 (HKCQ…SRKH), and 304–327 (FSCE…ESQH). The segment at 164–330 (HCVKCNKVFS…RHRESQHNLK (167 aa)) is mediates interaction with GATA1.

As to quaternary structure, interacts with histone methyltransferases EHMT2 and SUV39H1. Interacts with ARIH2 (via RING-type 2) and with RUNX1T1. Forms a complex with GATA1. Component of a RCOR-GFI-KDM1A-HDAC complex. Interacts directly with RCOR1, KDM1A and HDAC2. Methylation at Lys-8 in the SNAG domain seems required for the recruitment of the corepressor complex. Expressed in bone marrow and in spleen. Detected in hematopoietic stem cells, erythroblasts, and megakaryocytes. Expressed in thymocytes.

Its subcellular location is the nucleus. Essential proto-oncogenic transcriptional regulator necessary for development and differentiation of erythroid and megakaryocytic lineages. Component of a RCOR-GFI-KDM1A-HDAC complex that suppresses, via histone deacetylase (HDAC) recruitment, a number of genes implicated in multilineage blood cell development and controls hematopoietic differentiation. Transcriptional repressor or activator depending on both promoter and cell type context; represses promoter activity of SOCS1 and SOCS3 and thus, may regulate cytokine signaling pathways. Cooperates with GATA1 to repress target gene transcription, such as the apoptosis regulator BCL2L1; GFI1B silencing in leukemic cell lines markedly increase apoptosis rate. Inhibits down-regulation of MYC and MYB as well as the cyclin-dependent kinase inhibitor CDKN1A/P21WAF1 in IL6-treated myelomonocytic cells. Represses expression of GATA3 in T-cell lymphomas and inhibits GATA1-mediated transcription; as GATA1 also mediates erythroid GFI1B transcription, both GATA1 and GFI1B participate in a feedback regulatory pathway controlling the expression of GFI1B gene in erythroid cells. Suppresses GATA1-mediated stimulation of GFI1B promoter through protein interaction. Binds to gamma-satellite DNA and to its own promoter, auto-repressing its own expression. Alters histone methylation by recruiting histone methyltransferase to target genes promoters. Plays a role in heterochromatin formation. In Mus musculus (Mouse), this protein is Zinc finger protein Gfi-1b (Gfi1b).